Consider the following 136-residue polypeptide: NADPH-dependent 7-cyano-7-deazaguanine reductase (136 aa).

Catalysis depends on C50, which acts as the Thioimide intermediate. The active-site Proton donor is D57. Residues 72-74 (YEL) and 91-92 (HE) contribute to the substrate site.

Belongs to the GTP cyclohydrolase I family. QueF type 1 subfamily.

It is found in the cytoplasm. It catalyses the reaction 7-aminomethyl-7-carbaguanine + 2 NADP(+) = 7-cyano-7-deazaguanine + 2 NADPH + 3 H(+). Its pathway is tRNA modification; tRNA-queuosine biosynthesis. Functionally, catalyzes the NADPH-dependent reduction of 7-cyano-7-deazaguanine (preQ0) to 7-aminomethyl-7-deazaguanine (preQ1). This chain is NADPH-dependent 7-cyano-7-deazaguanine reductase, found in Prochlorococcus marinus (strain AS9601).